The following is a 312-amino-acid chain: Acetyl-coenzyme A carboxylase carboxyl transferase subunit alpha (312 aa).

The CoA carboxyltransferase C-terminal domain maps to 32–286 (LLEERLARLR…KEALLKALEE (255 aa)).

It belongs to the AccA family. In terms of assembly, acetyl-CoA carboxylase is a heterohexamer composed of biotin carboxyl carrier protein (AccB), biotin carboxylase (AccC) and two subunits each of ACCase subunit alpha (AccA) and ACCase subunit beta (AccD).

It is found in the cytoplasm. It carries out the reaction N(6)-carboxybiotinyl-L-lysyl-[protein] + acetyl-CoA = N(6)-biotinyl-L-lysyl-[protein] + malonyl-CoA. Its pathway is lipid metabolism; malonyl-CoA biosynthesis; malonyl-CoA from acetyl-CoA: step 1/1. In terms of biological role, component of the acetyl coenzyme A carboxylase (ACC) complex. First, biotin carboxylase catalyzes the carboxylation of biotin on its carrier protein (BCCP) and then the CO(2) group is transferred by the carboxyltransferase to acetyl-CoA to form malonyl-CoA. In Thermus thermophilus (strain ATCC BAA-163 / DSM 7039 / HB27), this protein is Acetyl-coenzyme A carboxylase carboxyl transferase subunit alpha.